Consider the following 243-residue polypeptide: 1-(5-phosphoribosyl)-5-[(5-phosphoribosylamino)methylideneamino] imidazole-4-carboxamide isomerase (243 aa).

Residue Asp17 is the Proton acceptor of the active site. The active-site Proton donor is Asp138.

Belongs to the HisA/HisF family.

It localises to the cytoplasm. It carries out the reaction 1-(5-phospho-beta-D-ribosyl)-5-[(5-phospho-beta-D-ribosylamino)methylideneamino]imidazole-4-carboxamide = 5-[(5-phospho-1-deoxy-D-ribulos-1-ylimino)methylamino]-1-(5-phospho-beta-D-ribosyl)imidazole-4-carboxamide. It participates in amino-acid biosynthesis; L-histidine biosynthesis; L-histidine from 5-phospho-alpha-D-ribose 1-diphosphate: step 4/9. This is 1-(5-phosphoribosyl)-5-[(5-phosphoribosylamino)methylideneamino] imidazole-4-carboxamide isomerase from Deinococcus geothermalis (strain DSM 11300 / CIP 105573 / AG-3a).